The following is a 242-amino-acid chain: MNAEKTSVAPNVDHAEIAKFEAVASRWWDLEGEFKPLHRINPLRLGYIAERSGGLFGKKVLDVGCGGGILAESMAREGATVTGLDMGAEPLQVAKLHALESGIQVDYVQETVEEHAAKHPQQYDVVTCMEMLEHVPDPQSVVHACARLVKPGGQVFFSTINRNGKAWLMAVVGAEYVMKMVPKGTHDVKKFIKPAELLSWVDQTTLKEQHIIGLHYNPLTNTFKLAPGVDVNYMLHTTAKQD.

S-adenosyl-L-methionine contacts are provided by Arg-44, Gly-64, Asp-85, and Met-129.

This sequence belongs to the methyltransferase superfamily. UbiG/COQ3 family.

The catalysed reaction is a 3-demethylubiquinol + S-adenosyl-L-methionine = a ubiquinol + S-adenosyl-L-homocysteine + H(+). The enzyme catalyses a 3-(all-trans-polyprenyl)benzene-1,2-diol + S-adenosyl-L-methionine = a 2-methoxy-6-(all-trans-polyprenyl)phenol + S-adenosyl-L-homocysteine + H(+). The protein operates within cofactor biosynthesis; ubiquinone biosynthesis. Functionally, O-methyltransferase that catalyzes the 2 O-methylation steps in the ubiquinone biosynthetic pathway. This is Ubiquinone biosynthesis O-methyltransferase from Klebsiella pneumoniae (strain 342).